We begin with the raw amino-acid sequence, 314 residues long: tRNA dimethylallyltransferase (314 aa).

An ATP-binding site is contributed by 13 to 20 (GPTAVGKT). Substrate is bound at residue 15 to 20 (TAVGKT). The tract at residues 38–41 (DSMQ) is interaction with substrate tRNA.

It belongs to the IPP transferase family. In terms of assembly, monomer. Mg(2+) is required as a cofactor.

The catalysed reaction is adenosine(37) in tRNA + dimethylallyl diphosphate = N(6)-dimethylallyladenosine(37) in tRNA + diphosphate. In terms of biological role, catalyzes the transfer of a dimethylallyl group onto the adenine at position 37 in tRNAs that read codons beginning with uridine, leading to the formation of N6-(dimethylallyl)adenosine (i(6)A). In Bacillus licheniformis (strain ATCC 14580 / DSM 13 / JCM 2505 / CCUG 7422 / NBRC 12200 / NCIMB 9375 / NCTC 10341 / NRRL NRS-1264 / Gibson 46), this protein is tRNA dimethylallyltransferase.